The following is a 122-amino-acid chain: Phospholipase A2 crotoxin basic chain (122 aa).

7 disulfides stabilise this stretch: cysteine 26–cysteine 115, cysteine 28–cysteine 44, cysteine 43–cysteine 95, cysteine 49–cysteine 122, cysteine 50–cysteine 88, cysteine 57–cysteine 81, and cysteine 75–cysteine 86. Ca(2+) contacts are provided by tyrosine 27, glycine 29, and glycine 31. The active site involves histidine 47. Aspartate 48 serves as a coordination point for Ca(2+). Residue aspartate 89 is part of the active site.

In terms of assembly, heterodimer of one acidic (CA also named crotapotin) and one basic (CB) subunits; non-covalently linked. Ca(2+) serves as cofactor. As to expression, expressed by the venom gland.

The protein resides in the secreted. It carries out the reaction a 1,2-diacyl-sn-glycero-3-phosphocholine + H2O = a 1-acyl-sn-glycero-3-phosphocholine + a fatty acid + H(+). Heterodimer CA-CB: Crotoxin is a potent presynaptic neurotoxin that possesses phospholipase A2 (PLA2) activity and exerts a lethal action by blocking neuromuscular transmission. It consists of a non-covalent association of a basic and weakly toxic PLA2 subunit (CB), with a small acidic, non-enzymatic and non-toxic subunit (CA also named crotapotin). The complex acts by binding to a specific 48-kDa protein (R48) receptor located on presynaptic membranes, forming a transient ternary complex CA-CB-R48, followed by dissociation of the CA-CB complex and release of the CA subunit. At equilibrium, only the CB subunits remain associated with the specific crotoxin receptor. In addition to neurotoxicity, crotoxin has been found to exert nephrotoxicity, and cardiovascular toxicity. Moreover, anti-inflammatory, immunomodulatory, anti-tumor and analgesic effects of crotoxin have also been reported. In terms of biological role, monomer CB: The basic subunit of crotoxin is a snake venom phospholipase A2 (PLA2) that exhibits weak neurotoxicity and strong anticoagulant effects by binding to factor Xa (F10) and inhibiting the prothrombinase activity. In addition, it exerts myotoxicity, nephrotoxicity, and cardiovascular toxicity as well as anti-inflammatory, immunomodulatory, anti-tumor and analgesic effects. Also shows a strong antimicrobial activity against X.axonopodis passiforae (Gram-negative) which is completely dependent on the enzymatic activity. PLA2 catalyzes the calcium-dependent hydrolysis of the 2- acyl groups in 3-sn-phosphoglycerides. This Crotalus durissus collilineatus (Brazilian rattlesnake) protein is Phospholipase A2 crotoxin basic chain.